Here is a 382-residue protein sequence, read N- to C-terminus: Alkanesulfonate monooxygenase (382 aa).

It belongs to the SsuD family.

The catalysed reaction is an alkanesulfonate + FMNH2 + O2 = an aldehyde + FMN + sulfite + H2O + 2 H(+). Functionally, catalyzes the desulfonation of aliphatic sulfonates. This is Alkanesulfonate monooxygenase from Pseudomonas putida (strain W619).